A 436-amino-acid chain; its full sequence is 3-ketoacyl-CoA thiolase (436 aa).

The active-site Acyl-thioester intermediate is Cys-99. Residues His-392 and Cys-422 each act as proton acceptor in the active site.

The protein belongs to the thiolase-like superfamily. Thiolase family. In terms of assembly, heterotetramer of two alpha chains (FadJ) and two beta chains (FadI).

Its subcellular location is the cytoplasm. It catalyses the reaction an acyl-CoA + acetyl-CoA = a 3-oxoacyl-CoA + CoA. The protein operates within lipid metabolism; fatty acid beta-oxidation. In terms of biological role, catalyzes the final step of fatty acid oxidation in which acetyl-CoA is released and the CoA ester of a fatty acid two carbons shorter is formed. The sequence is that of 3-ketoacyl-CoA thiolase from Citrobacter koseri (strain ATCC BAA-895 / CDC 4225-83 / SGSC4696).